The following is a 1165-amino-acid chain: Peroxisomal ATPase PEX6 (1165 aa).

It belongs to the AAA ATPase family. Interacts with PEX1; forming the PEX1-PEX6 AAA ATPase complex, which is composed of a heterohexamer formed by a trimer of PEX1-PEX6 dimers.

It is found in the membrane. It catalyses the reaction ATP + H2O = ADP + phosphate + H(+). Component of the PEX1-PEX6 AAA ATPase complex involved in peroxisome biosynthesis. The complex acts as a protein dislocase complex that mediates the ATP-dependent extraction of the PEX5 receptor from peroxisomal membranes, an essential step for PEX5 recycling. Specifically recognizes PEX5 monoubiquitinated at 'Cys-6', and pulls it out of the peroxisome lumen through the PEX2-PEX10-PEX12 retrotranslocation channel. Extraction by the PEX1-PEX6 AAA ATPase complex is accompanied by unfolding of the TPR repeats and release of bound cargo from PEX5. In Komagataella pastoris (Yeast), this protein is Peroxisomal ATPase PEX6.